The following is a 223-amino-acid chain: MSLANIIDHTALKPHTQKADILKLIEEAKTYKFASVCVNPTWVELAAKELKGTGVDVCTVIGFPLGANTTETKAFETKDAISKGATEVDMVINIAALKDKEDDVVEADIRGVVEAVAGKALVKVIIETCLLTDEEKERACRLAVSAGADFVKTSTGFSTGGATKEDIALMRKTVGPDIGVKASGGVRTKEDVDTMVEAGASRIGASAGVSIVKGENASGGDNY.

Asp89 serves as the catalytic Proton donor/acceptor. The Schiff-base intermediate with acetaldehyde role is filled by Lys152. Lys181 (proton donor/acceptor) is an active-site residue.

Belongs to the DeoC/FbaB aldolase family. DeoC type 1 subfamily.

The protein localises to the cytoplasm. The catalysed reaction is 2-deoxy-D-ribose 5-phosphate = D-glyceraldehyde 3-phosphate + acetaldehyde. It functions in the pathway carbohydrate degradation; 2-deoxy-D-ribose 1-phosphate degradation; D-glyceraldehyde 3-phosphate and acetaldehyde from 2-deoxy-alpha-D-ribose 1-phosphate: step 2/2. Its function is as follows. Catalyzes a reversible aldol reaction between acetaldehyde and D-glyceraldehyde 3-phosphate to generate 2-deoxy-D-ribose 5-phosphate. This Bacillus subtilis (strain 168) protein is Deoxyribose-phosphate aldolase.